The following is a 309-amino-acid chain: Probable sugar phosphate/phosphate translocator At5g05820 (309 aa).

The next 10 membrane-spanning stretches (helical) occupy residues 9-29, 42-62, 77-97, 100-120, 130-150, 154-174, 192-212, 229-249, 256-278, and 282-301; these read FFTI…LLLN, IFLT…AIAW, FFKI…GNIS, FLPV…TAVF, AWLT…ASGG, FHLF…LKSV, LLLY…LIME, IVWY…TNFL, ALTL…ILIF, and VSVT…ILYS. The EamA domain occupies 30–147; sequence KYLLSNYGFK…VPVVTGVVIA (118 aa).

This sequence belongs to the TPT transporter family. TPT (TC 2.A.7.9) subfamily.

It localises to the membrane. The chain is Probable sugar phosphate/phosphate translocator At5g05820 from Arabidopsis thaliana (Mouse-ear cress).